We begin with the raw amino-acid sequence, 1588 residues long: Pentafunctional AROM polypeptide (1588 aa).

A 3-dehydroquinate synthase region spans residues 1–392 (MVQLAKVPIL…YGDSAQFVSD (392 aa)). NAD(+) is bound by residues 43–45 (DTN), 78–81 (ETSK), 109–111 (GGV), and aspartate 114. Arginine 125 contributes to the 7-phospho-2-dehydro-3-deoxy-D-arabino-heptonate binding site. Residue 134-135 (TS) coordinates NAD(+). Residues aspartate 141 and lysine 147 each contribute to the 7-phospho-2-dehydro-3-deoxy-D-arabino-heptonate site. Lysine 156 contacts NAD(+). 7-phospho-2-dehydro-3-deoxy-D-arabino-heptonate is bound at residue asparagine 157. Residues 174-177 (WLET) and asparagine 185 each bind NAD(+). Residue glutamate 189 coordinates Zn(2+). Residues 189 to 192 (EVIK) and lysine 258 each bind 7-phospho-2-dehydro-3-deoxy-D-arabino-heptonate. The active-site Proton acceptor; for 3-dehydroquinate synthase activity is glutamate 268. Residues 272–276 (RNLLN) and histidine 279 each bind 7-phospho-2-dehydro-3-deoxy-D-arabino-heptonate. Residue histidine 279 participates in Zn(2+) binding. Histidine 283 acts as the Proton acceptor; for 3-dehydroquinate synthase activity in catalysis. Residues histidine 295 and lysine 364 each coordinate 7-phospho-2-dehydro-3-deoxy-D-arabino-heptonate. Zn(2+) is bound at residue histidine 295. The EPSP synthase stretch occupies residues 405–871 (VYPFKDIPAD…WDVLHSELGA (467 aa)). The For EPSP synthase activity role is filled by cysteine 853. Residues 890–1080 (SVVIIGMRAA…IPSGRSAFVC (191 aa)) form a shikimate kinase region. Residue 895–902 (GMRAAGKT) coordinates ATP. The tract at residues 1081 to 1293 (LTFDDLTEQT…AAPGQLTVAQ (213 aa)) is 3-dehydroquinase. Catalysis depends on histidine 1198, which acts as the Proton acceptor; for 3-dehydroquinate dehydratase activity. The Schiff-base intermediate with substrate; for 3-dehydroquinate dehydratase activity role is filled by lysine 1227. A shikimate dehydrogenase region spans residues 1306 to 1588 (PKELFVVGKP…KAIFDAVTKE (283 aa)).

It in the N-terminal section; belongs to the sugar phosphate cyclases superfamily. Dehydroquinate synthase family. This sequence in the 2nd section; belongs to the EPSP synthase family. In the 3rd section; belongs to the shikimate kinase family. The protein in the 4th section; belongs to the type-I 3-dehydroquinase family. It in the C-terminal section; belongs to the shikimate dehydrogenase family. Homodimer. Requires Zn(2+) as cofactor.

The protein localises to the cytoplasm. The catalysed reaction is 7-phospho-2-dehydro-3-deoxy-D-arabino-heptonate = 3-dehydroquinate + phosphate. It carries out the reaction 3-dehydroquinate = 3-dehydroshikimate + H2O. The enzyme catalyses shikimate + NADP(+) = 3-dehydroshikimate + NADPH + H(+). It catalyses the reaction shikimate + ATP = 3-phosphoshikimate + ADP + H(+). The catalysed reaction is 3-phosphoshikimate + phosphoenolpyruvate = 5-O-(1-carboxyvinyl)-3-phosphoshikimate + phosphate. The protein operates within metabolic intermediate biosynthesis; chorismate biosynthesis; chorismate from D-erythrose 4-phosphate and phosphoenolpyruvate: step 2/7. Its pathway is metabolic intermediate biosynthesis; chorismate biosynthesis; chorismate from D-erythrose 4-phosphate and phosphoenolpyruvate: step 3/7. It functions in the pathway metabolic intermediate biosynthesis; chorismate biosynthesis; chorismate from D-erythrose 4-phosphate and phosphoenolpyruvate: step 4/7. It participates in metabolic intermediate biosynthesis; chorismate biosynthesis; chorismate from D-erythrose 4-phosphate and phosphoenolpyruvate: step 5/7. The protein operates within metabolic intermediate biosynthesis; chorismate biosynthesis; chorismate from D-erythrose 4-phosphate and phosphoenolpyruvate: step 6/7. Its function is as follows. The AROM polypeptide catalyzes 5 consecutive enzymatic reactions in prechorismate polyaromatic amino acid biosynthesis. This is Pentafunctional AROM polypeptide from Saccharomyces cerevisiae (strain JAY291) (Baker's yeast).